The following is a 486-amino-acid chain: Protein nucleotidyltransferase YdiU (486 aa).

Glycine 90, glycine 92, arginine 93, lysine 113, aspartate 125, glycine 126, arginine 176, and arginine 183 together coordinate ATP. Aspartate 252 serves as the catalytic Proton acceptor. 2 residues coordinate Mg(2+): asparagine 253 and aspartate 262. Aspartate 262 serves as a coordination point for ATP.

Belongs to the SELO family. Mg(2+) serves as cofactor. Mn(2+) is required as a cofactor.

It catalyses the reaction L-seryl-[protein] + ATP = 3-O-(5'-adenylyl)-L-seryl-[protein] + diphosphate. The catalysed reaction is L-threonyl-[protein] + ATP = 3-O-(5'-adenylyl)-L-threonyl-[protein] + diphosphate. The enzyme catalyses L-tyrosyl-[protein] + ATP = O-(5'-adenylyl)-L-tyrosyl-[protein] + diphosphate. It carries out the reaction L-histidyl-[protein] + UTP = N(tele)-(5'-uridylyl)-L-histidyl-[protein] + diphosphate. It catalyses the reaction L-seryl-[protein] + UTP = O-(5'-uridylyl)-L-seryl-[protein] + diphosphate. The catalysed reaction is L-tyrosyl-[protein] + UTP = O-(5'-uridylyl)-L-tyrosyl-[protein] + diphosphate. Its function is as follows. Nucleotidyltransferase involved in the post-translational modification of proteins. It can catalyze the addition of adenosine monophosphate (AMP) or uridine monophosphate (UMP) to a protein, resulting in modifications known as AMPylation and UMPylation. The protein is Protein nucleotidyltransferase YdiU of Pseudomonas putida (strain GB-1).